The following is a 296-amino-acid chain: MELPGALQLGELAAAFASVPVFPLFDAAYFIVSVLYLKYEPGAVEMSRKSPFASWLCAMLHCFGSYILADLLLGESPIHYFSNNSSVILATAVWYLIFFCPMNLFYKCVSFLPVKLIFVAMKEVVRVRKIAAGVHHAHHQYHHGWFIMMATGWVKGSGVALMSNFEQLLRGVWRPETNEILHMSFPTKASLYGTVLFTLQQTHWLPVSEANLVFFFTMFMIVCKVFMTATHSHASPFAPVEGFICPVFFGSVSSGHTSHHNQHGHSHEASYQPPPPVKSKEELNEGTRKRKAKKAE.

At 1–19 the chain is on the lumenal side; it reads MELPGALQLGELAAAFASV. A helical transmembrane segment spans residues 20–37; it reads PVFPLFDAAYFIVSVLYL. At 38-51 the chain is on the cytoplasmic side; sequence KYEPGAVEMSRKSP. The chain crosses the membrane as a helical span at residues 52–73; sequence FASWLCAMLHCFGSYILADLLL. Ca(2+) is bound at residue Gly74. Residues 74–85 lie on the Lumenal side of the membrane; it reads GESPIHYFSNNS. Residues 86–103 traverse the membrane as a helical segment; that stretch reads SVILATAVWYLIFFCPMN. Residues 104–107 are Cytoplasmic-facing; it reads LFYK. A helical membrane pass occupies residues 108–126; the sequence is CVSFLPVKLIFVAMKEVVR. Residues Lys122 and Arg126 each coordinate a 1,2-diacyl-sn-glycero-3-phospho-(1D-myo-inositol-4,5-bisphosphate). Topologically, residues 127 to 144 are lumenal; sequence VRKIAAGVHHAHHQYHHG. The chain crosses the membrane as a helical span at residues 145 to 162; it reads WFIMMATGWVKGSGVALM. Residues 163–183 are Cytoplasmic-facing; it reads SNFEQLLRGVWRPETNEILHM. A helical transmembrane segment spans residues 184-201; it reads SFPTKASLYGTVLFTLQQ. Residues 202-209 are Lumenal-facing; sequence THWLPVSE. Residues 210-230 form a helical membrane-spanning segment; the sequence is ANLVFFFTMFMIVCKVFMTAT. Residues 231–273 lie on the Cytoplasmic side of the membrane; it reads HSHASPFAPVEGFICPVFFGSVSSGHTSHHNQHGHSHEASYQP. The tract at residues 256–296 is disordered; sequence HTSHHNQHGHSHEASYQPPPPVKSKEELNEGTRKRKAKKAE. Basic and acidic residues predominate over residues 278 to 287; sequence KSKEELNEGT.

This sequence belongs to the TMEM38 family. In terms of assembly, homotrimer; conformation seems to be controled by binding to diacylglycerol (DAG).

The protein localises to the sarcoplasmic reticulum membrane. It localises to the nucleus membrane. The enzyme catalyses K(+)(in) = K(+)(out). With respect to regulation, channel activity is activated by a change of voltage within the sarcoplasmic reticulum lumen and blocked by luminal high Ca(2+) levels. Functionally, intracellular monovalent cation channel required for maintenance of rapid intracellular calcium release. Acts as a potassium counter-ion channel that functions in synchronization with calcium release from intracellular stores. Opened by a change of voltage within the sarcoplasmic reticulum lumen. The polypeptide is Trimeric intracellular cation channel type A (TMEM38A) (Gallus gallus (Chicken)).